We begin with the raw amino-acid sequence, 250 residues long: Pyrroloquinoline-quinone synthase (250 aa).

It belongs to the PqqC family.

The catalysed reaction is 6-(2-amino-2-carboxyethyl)-7,8-dioxo-1,2,3,4,7,8-hexahydroquinoline-2,4-dicarboxylate + 3 O2 = pyrroloquinoline quinone + 2 H2O2 + 2 H2O + H(+). The protein operates within cofactor biosynthesis; pyrroloquinoline quinone biosynthesis. In terms of biological role, ring cyclization and eight-electron oxidation of 3a-(2-amino-2-carboxyethyl)-4,5-dioxo-4,5,6,7,8,9-hexahydroquinoline-7,9-dicarboxylic-acid to PQQ. The chain is Pyrroloquinoline-quinone synthase from Xanthomonas oryzae pv. oryzae (strain KACC10331 / KXO85).